The chain runs to 591 residues: Protein enabled homolog (591 aa).

The 111-residue stretch at 1–111 (MSEQSICQAR…SAMMHALEVL (111 aa)) folds into the WH1 domain. Residues 115-136 (ETGPTLPRQNSQLPAQVQNGPS) are compositionally biased toward polar residues. The interval 115-146 (ETGPTLPRQNSQLPAQVQNGPSQEELEIQRRQ) is disordered. Serine 125 is subject to Phosphoserine. Residues 135–265 (PSQEELEIQR…LEWERERRIS (131 aa)) adopt a coiled-coil conformation. 9 tandem repeats follow at residues 156-160 (LERER), 161-165 (LERER), 166-170 (MERER), 171-175 (LERER), 176-180 (LERER), 181-185 (LERER), 186-190 (LEQEQ), 191-195 (LERER), and 196-200 (QERER). Residues 156–200 (LERERLERERMERERLERERLERERLERERLEQEQLERERQERER) are 9 X 5 AA tandem repeats of [LMQ]-E-[QR]-E-[QR]. Basic and acidic residues predominate over residues 221-264 (RLDRERQERQERERLERLERERQERERQEQLEREQLEWERERRI). Residues 221–379 (RLDRERQERQ…PPLPASGFFL (159 aa)) are disordered. The residue at position 265 (serine 265) is a Phosphoserine; by PKA. Positions 275–305 (TPLNSVLGDSSASEPGLQAASQPAETPSQQG) are enriched in polar residues. Composition is skewed to pro residues over residues 311-323 (LAPP…PPGP) and 330-373 (LPPP…PPLP). Residues 391–411 (GLAAAIAGAKLRKVSRMEDTS) are EVH2 block A. The EVH2 stretch occupies residues 391–588 (GLAAAIAGAK…DAIRQELSKS (198 aa)). A KLKR motif is present at residues 400-403 (KLRK). Residues 405 to 549 (SRMEDTSFPS…LSQPSANGVQ (145 aa)) form a disordered region. Residues 432–443 (RGNGPLPLGGSG) are compositionally biased toward gly residues. The interval 442 to 459 (SGLMEEMSALLARRRRIA) is EVH2 block B. Isoleucine 465 bears the Phosphothreonine mark. 2 positions are modified to phosphoserine: glutamate 471 and glutamate 475. 2 stretches are compositionally biased toward polar residues: residues 479 to 491 (PVTS…STPE) and 499 to 509 (RTNTMNGSKSP). A Phosphothreonine modification is found at threonine 502. Residues serine 506, serine 508, and serine 512 each carry the phosphoserine modification. A compositionally biased stretch (polar residues) spans 538–549 (TPLSQPSANGVQ). The interval 554–588 (DYDRLKQDILDEMRKELTKLKEELIDAIRQELSKS) is EVH2 block C. Residues 557-587 (RLKQDILDEMRKELTKLKEELIDAIRQELSK) are a coiled coil.

It belongs to the Ena/VASP family. In terms of assembly, homotetramer. Interacts with APBB1IP, APBB1, PFN1 and ROBO4. Isoforms, containing the polyproline-rich regions with PPLP motifs, bind the WW domain of APBB1IP. Isoforms, containing the PPSY motif, bind, in vitro, to the WW2 and WW3 domains of NEDD4 and to the WW1 domain of YAP1. Binds the SH3 domain of BAIAP2-alpha but only after the autoinhibitory region of BAIAP2-alpha has been blocked by interaction with CDC42. Interacts, via the EVH1/WH1 domain, with the Pro-rich domains from VCL, ZYX and Listeria monocytogenes actA and with TES (via LIM domains). The TES LIM domain and the Pro-rich domains from VCL or ZYX compete for the same binding site. Interaction with ZYX is important for targeting ENAH to focal adhesions and enhances production of actin-rich structures at the apical surface of cells. Interacts, through the Pro-rich region, with the C-terminal SH3 domain of DNMPB. Binds GPHN. Interacts with FAT1 (via EVH1 domains). Heterotrimer with TES and ACTL7A. Interacts with PRPF40A. NTN1-induced PKA phosphorylation on Ser-265 directly parallels the formation of filopodial protrusions. In terms of tissue distribution, expressed in myoepithelia of parotid, breast, bronchial glands and sweat glands. Expressed in colon-rectum muscolaris mucosae epithelium, pancreas acinar ductal epithelium, endometrium epithelium, prostate fibromuscolar stroma and placenta vascular media. Overexpressed in a majority of breast cancer cell lines and primary breast tumor lesions.

Its subcellular location is the cytoplasm. It localises to the cytoskeleton. It is found in the cell projection. The protein localises to the lamellipodium. The protein resides in the filopodium. Its subcellular location is the synapse. It localises to the cell junction. It is found in the focal adhesion. Functionally, ena/VASP proteins are actin-associated proteins involved in a range of processes dependent on cytoskeleton remodeling and cell polarity such as axon guidance and lamellipodial and filopodial dynamics in migrating cells. ENAH induces the formation of F-actin rich outgrowths in fibroblasts. Acts synergistically with BAIAP2-alpha and downstream of NTN1 to promote filipodia formation. This chain is Protein enabled homolog (ENAH), found in Homo sapiens (Human).